The following is a 526-amino-acid chain: Fatty-acid amide hydrolase 2-B (526 aa).

The helical transmembrane segment at 12 to 32 threads the bilayer; that stretch reads CLLVLVSGLFLALFRLLSPGT. Active-site charge relay system residues include Lys-128 and Ser-203. The active-site Acyl-ester intermediate is Ser-227.

Belongs to the amidase family.

It localises to the membrane. The catalysed reaction is N-(5Z,8Z,11Z,14Z-eicosatetraenoyl)-ethanolamine + H2O = ethanolamine + (5Z,8Z,11Z,14Z)-eicosatetraenoate. It catalyses the reaction (9Z)-octadecenamide + H2O = (9Z)-octadecenoate + NH4(+). This Danio rerio (Zebrafish) protein is Fatty-acid amide hydrolase 2-B (faah2b).